The sequence spans 82 residues: uncharacterized protein (82 aa).

This is an uncharacterized protein from Ictaluridae (bullhead catfishes).